The sequence spans 157 residues: DNA gyrase inhibitor (157 aa).

The protein belongs to the DNA gyrase inhibitor family. Interacts with DNA gyrase.

The protein localises to the cytoplasm. Functionally, inhibits the supercoiling activity of DNA gyrase. Acts by inhibiting DNA gyrase at an early step, prior to (or at the step of) binding of DNA by the gyrase. It protects cells against toxins that target DNA gyrase, by inhibiting activity of these toxins and reducing the formation of lethal double-strand breaks in the cell. The polypeptide is DNA gyrase inhibitor (Enterobacter lignolyticus (strain SCF1)).